We begin with the raw amino-acid sequence, 906 residues long: MVSFGGLARKIFGSSNDRRVKTLRQRAEQITALEKNYENLTDEQLQAKTAEFRAALAEGKSLDSLLPDAFATAREAAKRVLGMRPFDVQLIGGMVLHERGIAEMRTGEGKTLMATLPVYLNALEGKGVHVVTVNDYLATRDAETMGRLYNFLGLTVGVIKHGLDDDERRAAYACDITYGTNNELGFDYLRDNMKYERAQMVQRPHNYAIVDEVDSILIDEARTPLIISGPLEDRSDFYNLIDTFIPPLAEEDYEVDEKQKTAIFTEVGTEKVEKLLEAAGHLKGESLYDIENVAVVHHLNNALRAHKLFQRDKDYIVRNDEIVIIDEFTGRMMPGRRYSEGLHQALEAKEHVTIQPENQTLASITFQNYFRMYNKLSGMTGTAATEAEEFGNIYGLEVLEIPTNLPVQRIDEDDEVYRTVEEKYRAIVRDIRASHEKGQPILVGTTSIEKSEQLAERLRREGIKGFQVLNARYHEQEAYIIAQAGVPGAVTIATNMAGRGTDIQLGGNLEMRVRQELSDVPEGPEREEKIAAIKADIAQLKEKALAAGGLYVLATERHESRRIDNQLRGRSGRQGDPGRSKFFLSLQDDLMRIFGSDRMDGMLQKLGLKEDEAIVHPWINKALEKAQKKVEARNFEIRKNLLKYDDVMNDQRKVIFEQRLEMMDEEDLTETVAEMRHEVIEDMVILRIPKDAYAEKWDIAGLKQDIASKLNLDLPVEEWAKEEGIAEEEFENRIKEAADKAAAEKAERFGPQIMTYVEKSVIMQSLDNLWREHLVNLDHLRSVVGFRGYAQRDPLNEYKTEAFELFQTMLANLREVVISQLMRVEIVREAPPEPQLPPMAGLHIDGATGENDFDEAIWAEHQHDDRIVPPAQRDPADPRTWGKVSRNEPCPCGSGKKYKHCHGAFE.

Residues Gln-89, 107–111, and Asp-502 each bind ATP; that span reads GEGKT. The tract at residues 868 to 887 is disordered; that stretch reads VPPAQRDPADPRTWGKVSRN. Residues Cys-890, Cys-892, Cys-901, and His-902 each coordinate Zn(2+).

Belongs to the SecA family. As to quaternary structure, monomer and homodimer. Part of the essential Sec protein translocation apparatus which comprises SecA, SecYEG and auxiliary proteins SecDF-YajC and YidC. Zn(2+) serves as cofactor.

The protein localises to the cell inner membrane. It is found in the cytoplasm. The enzyme catalyses ATP + H2O + cellular proteinSide 1 = ADP + phosphate + cellular proteinSide 2.. Part of the Sec protein translocase complex. Interacts with the SecYEG preprotein conducting channel. Has a central role in coupling the hydrolysis of ATP to the transfer of proteins into and across the cell membrane, serving both as a receptor for the preprotein-SecB complex and as an ATP-driven molecular motor driving the stepwise translocation of polypeptide chains across the membrane. The chain is Protein translocase subunit SecA from Brucella melitensis biotype 1 (strain ATCC 23456 / CCUG 17765 / NCTC 10094 / 16M).